A 250-amino-acid polypeptide reads, in one-letter code: 5-oxoprolinase subunit A (250 aa).

Belongs to the LamB/PxpA family. As to quaternary structure, forms a complex composed of PxpA, PxpB and PxpC.

It carries out the reaction 5-oxo-L-proline + ATP + 2 H2O = L-glutamate + ADP + phosphate + H(+). Catalyzes the cleavage of 5-oxoproline to form L-glutamate coupled to the hydrolysis of ATP to ADP and inorganic phosphate. This Staphylococcus aureus (strain MRSA252) protein is 5-oxoprolinase subunit A.